The sequence spans 173 residues: Secreted RxLR effector protein RXLR-C12 (173 aa).

The N-terminal stretch at methionine 1–threonine 18 is a signal peptide. The short motif at arginine 41 to arginine 55 is the RxLR-dEER element. N-linked (GlcNAc...) asparagine glycosylation occurs at asparagine 155.

This sequence belongs to the RxLR effector family.

The protein resides in the secreted. Its subcellular location is the host cytoplasm. It localises to the host nucleus. Functionally, secreted effector that suppresses pattern-triggered immunity (PTI) in plant host. This Plasmopara halstedii (Downy mildew of sunflower) protein is Secreted RxLR effector protein RXLR-C12.